A 223-amino-acid polypeptide reads, in one-letter code: DNA mismatch repair protein MutH (223 aa).

This sequence belongs to the MutH family.

The protein localises to the cytoplasm. In terms of biological role, sequence-specific endonuclease that cleaves unmethylated GATC sequences. It is involved in DNA mismatch repair. This chain is DNA mismatch repair protein MutH, found in Shewanella sp. (strain ANA-3).